The sequence spans 1578 residues: DNA-directed RNA polymerase subunit beta' (1578 aa).

Zn(2+)-binding residues include Cys101, Cys103, Cys115, and Cys118. The Mg(2+) site is built by Asp1286, Asp1288, and Asp1290.

This sequence belongs to the RNA polymerase beta' chain family. RpoC1 subfamily. In terms of assembly, in plastids the minimal PEP RNA polymerase catalytic core is composed of four subunits: alpha, beta, beta', and beta''. When a (nuclear-encoded) sigma factor is associated with the core the holoenzyme is formed, which can initiate transcription. Mg(2+) is required as a cofactor. The cofactor is Zn(2+).

It localises to the plastid. It is found in the chloroplast. It carries out the reaction RNA(n) + a ribonucleoside 5'-triphosphate = RNA(n+1) + diphosphate. In terms of biological role, DNA-dependent RNA polymerase catalyzes the transcription of DNA into RNA using the four ribonucleoside triphosphates as substrates. The sequence is that of DNA-directed RNA polymerase subunit beta' from Tupiella akineta (Green alga).